The chain runs to 408 residues: UPF0761 membrane protein Avin_36810 (408 aa).

6 helical membrane passes run 33–53, 92–112, 132–152, 174–194, 209–229, and 238–258; these read YTALFAVVPIMTLIFVVLSVV, HLTWLGVGVLMVTALLMLMTV, FLLHWAILSLGPLLLGTGFAL, LLKVMPLLFSTAAFTLLYVAV, LFAAVLFEAAKGLFGLYVALF, and AFAAVPLFLLWMYLSWMIVLL.

Belongs to the UPF0761 family.

The protein localises to the cell inner membrane. This Azotobacter vinelandii (strain DJ / ATCC BAA-1303) protein is UPF0761 membrane protein Avin_36810.